The sequence spans 653 residues: Amyloid beta A4 precursor protein-binding family B member 1-interacting protein (653 aa).

The interval Asn82 to Glu141 is disordered. A compositionally biased stretch (pro residues) spans Leu116–Leu134. The Ras-associating domain maps to Lys165–Tyr253. In terms of domain architecture, PH spans Val295–Tyr404. A compositionally biased stretch (basic and acidic residues) spans Lys462 to Thr481. The tract at residues Lys462 to Thr653 is disordered. A compositionally biased stretch (pro residues) spans Pro585–Pro604. A compositionally biased stretch (basic residues) spans Val605–Lys614.

The protein belongs to the MRL family.

It is found in the cell membrane. It localises to the cytoplasm. Its subcellular location is the cytoskeleton. Functionally, appears to function in the signal transduction from Ras activation to actin cytoskeletal remodeling. This Xenopus laevis (African clawed frog) protein is Amyloid beta A4 precursor protein-binding family B member 1-interacting protein (apbb1ip).